The following is a 352-amino-acid chain: Glycerol-3-phosphate dehydrogenase 1-like protein (352 aa).

13–18 provides a ligand contact to NAD(+); the sequence is GSGNWG. A substrate-binding site is contributed by Lys-123. NAD(+) is bound at residue Ala-156. Residue Lys-207 is the Proton acceptor of the active site. 3 residues coordinate NAD(+): Arg-272, Lys-299, and Gln-301. Residue 272–273 coordinates substrate; that stretch reads RN.

It belongs to the NAD-dependent glycerol-3-phosphate dehydrogenase family.

It is found in the cytoplasm. It carries out the reaction sn-glycerol 3-phosphate + NAD(+) = dihydroxyacetone phosphate + NADH + H(+). Its function is as follows. Plays a role in regulating cardiac sodium current. This chain is Glycerol-3-phosphate dehydrogenase 1-like protein (gpd1l), found in Xenopus tropicalis (Western clawed frog).